The chain runs to 296 residues: N-acetylmuramic acid 6-phosphate etherase (296 aa).

In terms of domain architecture, SIS spans 54–217 (VIASFQQGGR…STTAMVGIGK (164 aa)). Glu82 acts as the Proton donor in catalysis. Residue Glu113 is part of the active site.

Belongs to the GCKR-like family. MurNAc-6-P etherase subfamily. Homodimer.

It catalyses the reaction N-acetyl-D-muramate 6-phosphate + H2O = N-acetyl-D-glucosamine 6-phosphate + (R)-lactate. The protein operates within amino-sugar metabolism; N-acetylmuramate degradation. Specifically catalyzes the cleavage of the D-lactyl ether substituent of MurNAc 6-phosphate, producing GlcNAc 6-phosphate and D-lactate. The chain is N-acetylmuramic acid 6-phosphate etherase from Shouchella clausii (strain KSM-K16) (Alkalihalobacillus clausii).